A 260-amino-acid chain; its full sequence is Hydroxyethylthiazole kinase 2 (260 aa).

A substrate-binding site is contributed by M40. The ATP site is built by R116 and T161. A substrate-binding site is contributed by A188.

Belongs to the Thz kinase family. Requires Mg(2+) as cofactor.

It carries out the reaction 5-(2-hydroxyethyl)-4-methylthiazole + ATP = 4-methyl-5-(2-phosphooxyethyl)-thiazole + ADP + H(+). The protein operates within cofactor biosynthesis; thiamine diphosphate biosynthesis; 4-methyl-5-(2-phosphoethyl)-thiazole from 5-(2-hydroxyethyl)-4-methylthiazole: step 1/1. Its function is as follows. Catalyzes the phosphorylation of the hydroxyl group of 4-methyl-5-beta-hydroxyethylthiazole (THZ). The polypeptide is Hydroxyethylthiazole kinase 2 (Oceanobacillus iheyensis (strain DSM 14371 / CIP 107618 / JCM 11309 / KCTC 3954 / HTE831)).